Consider the following 25-residue polypeptide: Defensin D3 (25 aa).

It belongs to the DEFL family. Group IV subfamily. As to expression, distributed in the epidermal cell layer of leaves and in the subepidermal layer region of stems. Not in roots.

It localises to the secreted. It is found in the cell wall. Functionally, antimicrobial peptide. Active against Fusarium spp., Gram-positive and Gram-negative bacterial pathogens. The sequence is that of Defensin D3 from Spinacia oleracea (Spinach).